Consider the following 258-residue polypeptide: MFEARLLQASLLKKILESIKDLVESANFDCSPEGISLQAMDGTHVTLINLVLRNEGFETYNCDRSLSLGLSLVSLSKILKCAGNDDTLTIRARDNESDTVTFVFESPKNDRVSDFEIKLIDIKNEQYSIRKSDYSAVIKMPSAELQRICRDLSIIGEIVTISANKEGVKFSVSGDSGSGNITIKPTSDSDVPAEQATVIESKEPVVLNFALKFLSNFTKATPLSPMVTLSMSEGIPVVVEYKIDDLGFLGFFLAPKIE.

The DNA-binding element occupies 61 to 80 (NCDRSLSLGLSLVSLSKILK).

Belongs to the PCNA family. As to quaternary structure, homotrimer. Forms a complex with activator 1 heteropentamer in the presence of ATP.

It is found in the nucleus. Its function is as follows. This protein is an auxiliary protein of DNA polymerase delta and is involved in the control of eukaryotic DNA replication by increasing the polymerase's processibility during elongation of the leading strand. The polypeptide is Proliferating cell nuclear antigen (pcna) (Dictyostelium discoideum (Social amoeba)).